Consider the following 187-residue polypeptide: Ribosome-recycling factor (187 aa).

The protein belongs to the RRF family.

Its subcellular location is the cytoplasm. Functionally, responsible for the release of ribosomes from messenger RNA at the termination of protein biosynthesis. May increase the efficiency of translation by recycling ribosomes from one round of translation to another. This is Ribosome-recycling factor from Paracoccus denitrificans (strain Pd 1222).